Reading from the N-terminus, the 992-residue chain is RNA-binding motif protein, X-linked-like-3 (992 aa).

Residues 8-86 (EKLFVGGLNL…KAIMVAQTIK (79 aa)) enclose the RRM domain. Disordered stretches follow at residues 91-130 (SSRW…PDDG), 144-169 (APMP…DPGD), 188-207 (PDYC…GRDH), 278-385 (DHLP…DSSS), 397-511 (EEYQ…HRYR), 562-588 (SLDA…SHRY), and 644-992 (NSGG…QSRY). The span at 284 to 296 (YSGGRSSSSNSYS) shows a compositional bias: low complexity. A compositionally biased stretch (basic and acidic residues) spans 297-316 (RSDRYGEEGCYEEYRGRSPD). Over residues 318–334 (HSGGRNSSSNSYGQSHH) the composition is skewed to low complexity. Basic and acidic residues predominate over residues 335-371 (YGGEGRYEEYRGRYEEYRGRSHEARSGGRSTDAHSGG). Positions 454 to 471 (THSGGRSSSSNSYGQSHR) are enriched in low complexity. Basic and acidic residues predominate over residues 472 to 488 (YGGEGHYEYRGRSHDAH). 3 stretches are compositionally biased toward polar residues: residues 564–574 (DANSGGRSPNA), 644–664 (NSGG…SQSH), and 752–774 (DANS…SNSY). Positions 785-798 (HYEEYRGRSHDTHS) are enriched in basic and acidic residues. Residues 818–828 (GRNSFSNSYGQ) show a composition bias toward polar residues. 3 stretches are compositionally biased toward basic and acidic residues: residues 831 to 842 (HYGRGGRYEEYQ), 920 to 948 (SGDH…RPDR), and 981 to 992 (GRFERGEGQSRY).

This is RNA-binding motif protein, X-linked-like-3 (RBMXL3) from Pan troglodytes (Chimpanzee).